The chain runs to 1481 residues: MQKSPLEKAGVLSKLFFSWTRPILRKGYRQRLELSDIYQIPSADSADNLSEKLEREWDRELASKKKPKLINALRRCFFWRFMFYGILLYLGEVTKAVQPLLLGRIIASYDPDNKVERSIAIYLGIGLCLLFVVRTLLLHPAIFGLHHIGMQMRIAMFSLIYKKTLKLSSRVLDKISIGQLISLLSNNLNKFDEGLALAHFVWISPLQVTLLMGLLWELLQASAFCGLAFLIVLALVQAGLGRMMMKYRDQRAGKINERLVITSEMIENIQSVKAYCWEEAMEKMIENLRQTELKLTRKAAYVRYFNSSAFFFSGFFVVFLSVLPYALTKGIILRKIFTTISFCIVLRMAVTRQFPWAVQTWYDSLGAINKIQDFLQKQEYKTLEYNLTTTEVVMDNVTAFWEEGFGELFEKAKQNNSDRKISNGDNNLFFSNFSLLGAPVLKDISFKIERGQLLAVAGSTGAGKTSLLMMIMGELEPSEGKIKHSGRISFCSQFSWIMPGTIKENIIFGVSYDEYRYKSVIKACQLEEDISKFTEKDNTVLGEGGITLSGGQRARISLARAVYKDADLYLLDSPFGYLDVLTEKEIFESCVCKLMANKTRILVTSKMEHLKKADKILILHEGSSYFYGTFSELQSLRPDFSSKLMGYDSFDQFSAERRNSILTETLRRFSLEGDASISWNDTRKQSFKQNGELGEKRKNSILNPVNSMRKFSIVPKTPLQMNGIEEDSDASIERRLSLVPDSEQGEAILPRSNMINTGPMLQGCRRQSVLNLMTHSVSQGPSIYRRTTTSARKMSLAPQTNLTEMDIYSRRLSQESGLEISEEINEEDLKECFIDDVDSIPTVTTWNTYLRYITVHRSLIFVLIWCIVIFLAEVAASLVVLWLFGNTAPQDKENSTKSGNSSYAVIITNTSSYYFFYIYVGVADTLLALGLFRGLPLVHTLITVSKILHHKMLHSVLQAPMSTLNTLKAGGILNRFSKDIAILDDLLPLTIFDFIQLLLIVVGAIAVVSVLQPYIFLATVPVIAAFILLRAYFLHTSQQLKQLESEGRSPIFTHLVTSLKGLWTLRAFGRQPYFETLFHKALNLHTANWFLYLSTLRWFQMRIEMIFVLFFIAVAFISILTTGEGEGRVGIILTLAMNIMSTLQWAVNSSIDVDSLMRSVSRVFKFIDMPTEETKSTKSIKPSSNCQLSKVMIIENQHVKKDDVWPSGGQMTVKGLTAKYIDSGNAILENISFSISPGQRVGLLGRTGSGKSTLLSAFLRLLNTEGEIQIDGVSWDSITLQQWRKAFGVIPQKVFIFSGTFRKNLDPYEQWSDQEIWKVADEVGLRSVIEQFPGKLDFVLVDGGYVLSHGHKQLMCLARSVLSKAKILLLDEPSAHLDPITYQIIRRTLKQAFADCTVILCEHRIEAMLECQRFLVIEENTVRQYESIQKLLSEKSLFRQAISSSDRAKLFPHRNSSKHKSRPQITALKEEAEEEVQGTRL.

Over 1–77 the chain is Cytoplasmic; that stretch reads MQKSPLEKAG…KLINALRRCF (77 aa). Residues 78 to 98 form a helical membrane-spanning segment; sequence FWRFMFYGILLYLGEVTKAVQ. The ABC transmembrane type-1 1 domain maps to 81–365; the sequence is FMFYGILLYL…WAVQTWYDSL (285 aa). Topologically, residues 99–122 are extracellular; it reads PLLLGRIIASYDPDNKVERSIAIY. The helical transmembrane segment at 123-146 threads the bilayer; it reads LGIGLCLLFVVRTLLLHPAIFGLH. Over 147 to 195 the chain is Cytoplasmic; the sequence is HIGMQMRIAMFSLIYKKTLKLSSRVLDKISIGQLISLLSNNLNKFDEGL. Residues 196 to 216 traverse the membrane as a helical segment; it reads ALAHFVWISPLQVTLLMGLLW. At 217 to 222 the chain is on the extracellular side; that stretch reads ELLQAS. Residues 223-243 form a helical membrane-spanning segment; sequence AFCGLAFLIVLALVQAGLGRM. The Cytoplasmic segment spans residues 244-298; sequence MMKYRDQRAGKINERLVITSEMIENIQSVKAYCWEEAMEKMIENLRQTELKLTRK. The helical transmembrane segment at 299–319 threads the bilayer; sequence AAYVRYFNSSAFFFSGFFVVF. Residues 320–339 are Extracellular-facing; sequence LSVLPYALTKGIILRKIFTT. The helical transmembrane segment at 340-358 threads the bilayer; that stretch reads ISFCIVLRMAVTRQFPWAV. Residues 359–858 lie on the Cytoplasmic side of the membrane; that stretch reads QTWYDSLGAI…YLRYITVHRS (500 aa). ATP is bound by residues Trp401, Ser434, 458–465, and Gln493; that span reads GSTGAGKT. The ABC transporter 1 domain occupies 423-646; it reads NGDNNLFFSN…RPDFSSKLMG (224 aa). Cys524 carries S-palmitoyl cysteine lipidation. Residues Ser549 and Ser660 each carry the phosphoserine modification. The segment at 654-831 is disordered R region; the sequence is SAERRNSILT…EEINEEDLKE (178 aa). At Ser670 the chain carries Phosphoserine; by PKA. A Phosphoserine modification is found at Ser686. Lys688 is covalently cross-linked (Glycyl lysine isopeptide (Lys-Gly) (interchain with G-Cter in ubiquitin)). 2 positions are modified to phosphoserine: Ser700 and Ser712. Thr717 carries the post-translational modification Phosphothreonine. 5 positions are modified to phosphoserine: Ser737, Ser768, Ser790, Ser795, and Ser813. The chain crosses the membrane as a helical span at residues 859 to 879; it reads LIFVLIWCIVIFLAEVAASLV. One can recognise an ABC transmembrane type-1 2 domain in the interval 859–1155; it reads LIFVLIWCIV…AVNSSIDVDS (297 aa). At 880–918 the chain is on the extracellular side; it reads VLWLFGNTAPQDKENSTKSGNSSYAVIITNTSSYYFFYI. N-linked (GlcNAc...) asparagine glycans are attached at residues Asn894, Asn900, and Asn909. Residues 919-939 traverse the membrane as a discontinuously helical segment; sequence YVGVADTLLALGLFRGLPLVH. At 940-990 the chain is on the cytoplasmic side; that stretch reads TLITVSKILHHKMLHSVLQAPMSTLNTLKAGGILNRFSKDIAILDDLLPLT. Residues 991-1011 traverse the membrane as a helical segment; it reads IFDFIQLLLIVVGAIAVVSVL. The Extracellular portion of the chain corresponds to 1012-1013; sequence QP. Residues 1014-1034 traverse the membrane as a helical segment; that stretch reads YIFLATVPVIAAFILLRAYFL. Residues 1035-1095 lie on the Cytoplasmic side of the membrane; sequence HTSQQLKQLE…TANWFLYLST (61 aa). Residues 1096 to 1116 traverse the membrane as a helical segment; the sequence is LRWFQMRIEMIFVLFFIAVAF. The Extracellular segment spans residues 1117-1130; sequence ISILTTGEGEGRVG. The chain crosses the membrane as a helical span at residues 1131-1151; sequence IILTLAMNIMSTLQWAVNSSI. Residues 1152-1481 are Cytoplasmic-facing; sequence DVDSLMRSVS…AEEEVQGTRL (330 aa). An ABC transporter 2 domain is found at 1199-1444; that stretch reads VKKDDVWPSG…KSLFRQAISS (246 aa). ATP is bound by residues Tyr1220 and 1245 to 1252; that span reads GRTGSGKS. Residues 1387 to 1481 form an interaction with GORASP2 region; sequence RTLKQAFADC…AEEEVQGTRL (95 aa). A lipid anchor (S-palmitoyl cysteine) is attached at Cys1396. Residues Ser1445 and Ser1457 each carry the phosphoserine modification. A disordered region spans residues 1449–1481; the sequence is KLFPHRNSSKHKSRPQITALKEEAEEEVQGTRL. Over residues 1450-1462 the composition is skewed to basic residues; that stretch reads LFPHRNSSKHKSR. Residues 1471 to 1481 show a composition bias toward acidic residues; sequence EAEEEVQGTRL. Residues 1479 to 1481 carry the PDZ-binding motif; that stretch reads TRL.

Belongs to the ABC transporter superfamily. ABCC family. CFTR transporter (TC 3.A.1.202) subfamily. In terms of assembly, monomer; does not require oligomerization for channel activity. May form oligomers in the membrane. Interacts with SLC26A3, SLC26A6 and NHERF1. Interacts with SHANK2. Interacts with MYO6. Interacts (via C-terminus) with GOPC (via PDZ domain); this promotes CFTR internalization and thereby decreases channel activity. Interacts with SLC4A7 through NHERF1. Found in a complex with MYO5B and RAB11A. Interacts with ANO1. Interacts with SLC26A8. Interacts with AHCYL1; the interaction increases CFTR activity. Interacts with CSE1L. The core-glycosylated form interacts with GORASP2 (via PDZ GRASP-type 1 domain) in respone to ER stress. Interacts with MARCHF2; the interaction leads to CFTR ubiqtuitination and degradation. Interacts with ADGRG2. N-glycosylated. Post-translationally, phosphorylated; cAMP treatment promotes phosphorylation and activates the channel. Dephosphorylation decreases the ATPase activity (in vitro). Phosphorylation at PKA sites activates the channel. Phosphorylation at PKC sites enhances the response to phosphorylation by PKA. Phosphorylated by AMPK; this inhibits channel activity. In terms of processing, ubiquitinated, leading to its degradation in the lysosome. Deubiquitination by USP10 in early endosomes enhances its endocytic recycling to the cell membrane. Ubiquitinated by RNF185 during ER stress. Ubiquitinated by MARCHF2. Isoform 1 is expressed in the pancreas. Isoform 2 is specifically expressed in the ventricle.

It localises to the apical cell membrane. It is found in the early endosome membrane. Its subcellular location is the cell membrane. The protein localises to the recycling endosome membrane. The protein resides in the endoplasmic reticulum membrane. It localises to the nucleus. It catalyses the reaction ATP + H2O + closed Cl(-) channel = ADP + phosphate + open Cl(-) channel.. The catalysed reaction is chloride(in) = chloride(out). It carries out the reaction hydrogencarbonate(in) = hydrogencarbonate(out). The enzyme catalyses ATP + H2O = ADP + phosphate + H(+). Epithelial ion channel that plays an important role in the regulation of epithelial ion and water transport and fluid homeostasis. Mediates the transport of chloride ions across the cell membrane. Possesses an intrinsic ATPase activity and utilizes ATP to gate its channel; the passive flow of anions through the channel is gated by cycles of ATP binding and hydrolysis by the ATP-binding domains. The ion channel is also permeable to HCO(3)(-); selectivity depends on the extracellular chloride concentration. Exerts its function also by modulating the activity of other ion channels and transporters. Contributes to the regulation of the pH and the ion content of the epithelial fluid layer. Modulates the activity of the epithelial sodium channel (ENaC) complex, in part by regulating the cell surface expression of the ENaC complex. May regulate bicarbonate secretion and salvage in epithelial cells by regulating the transporter SLC4A7. Can inhibit the chloride channel activity of ANO1. Plays a role in the chloride and bicarbonate homeostasis during sperm epididymal maturation and capacitation. The polypeptide is Cystic fibrosis transmembrane conductance regulator (Oryctolagus cuniculus (Rabbit)).